The sequence spans 358 residues: tRNA N6-adenosine threonylcarbamoyltransferase (358 aa).

2 residues coordinate Fe cation: His-122 and His-126. Substrate contacts are provided by residues 145–149 (LVSGG), Asp-178, Gly-191, and Asn-287. Asp-315 is a Fe cation binding site.

This sequence belongs to the KAE1 / TsaD family. Fe(2+) serves as cofactor.

The protein localises to the cytoplasm. The catalysed reaction is L-threonylcarbamoyladenylate + adenosine(37) in tRNA = N(6)-L-threonylcarbamoyladenosine(37) in tRNA + AMP + H(+). Required for the formation of a threonylcarbamoyl group on adenosine at position 37 (t(6)A37) in tRNAs that read codons beginning with adenine. Is involved in the transfer of the threonylcarbamoyl moiety of threonylcarbamoyl-AMP (TC-AMP) to the N6 group of A37, together with TsaE and TsaB. TsaD likely plays a direct catalytic role in this reaction. This chain is tRNA N6-adenosine threonylcarbamoyltransferase, found in Hydrogenovibrio crunogenus (strain DSM 25203 / XCL-2) (Thiomicrospira crunogena).